The following is a 119-amino-acid chain: MSLRLGAISSCTTSSPFPVLQVLLPLSLLLTTLVPATMGAAKIEGRMAHVELRCLCLNTVSGIHPSNIQSLEVIRAGAHCAKVEVIATLKNDKKICLDPEAPRIKKIVQKIMEDGGSAA.

The signal sequence occupies residues 1-33 (MSLRLGAISSCTTSSPFPVLQVLLPLSLLLTTL). A propeptide spanning residues 34-39 (VPATMG) is cleaved from the precursor. 2 disulfides stabilise this stretch: cysteine 54–cysteine 80 and cysteine 56–cysteine 96.

Its subcellular location is the secreted. Its function is as follows. Chemoattractant factor for neutrophils. This Sus scrofa (Pig) protein is Platelet basic protein (PPBP).